The sequence spans 90 residues: Bombyxin B-5 (90 aa).

An N-terminal signal peptide occupies residues 1 to 20 (MMKTAVMFILVVVISLTYSS). Disulfide bonds link Cys30–Cys75, Cys42–Cys88, and Cys74–Cys79. Positions 49–64 (GGAQYAPYWQETYLRS) are cleaved as a propeptide — c peptide like.

Belongs to the insulin family. In terms of assembly, heterodimer of a B chain and an A chain linked by two disulfide bonds.

The protein resides in the secreted. Its function is as follows. Brain peptide responsible for activation of prothoracic glands to produce ecdysone in insects. This is Bombyxin B-5 (BBXB5) from Bombyx mori (Silk moth).